The following is a 343-amino-acid chain: Dimethyladenosine transferase 1, mitochondrial (343 aa).

Residues 1–27 constitute a mitochondrion transit peptide; it reads MAASGKLSTWRLPPLPTIREIIKLLRV. Residues Leu-38, Gly-63, Glu-85, Lys-86, Asp-111, Val-112, and Asn-141 each contribute to the S-adenosyl-L-methionine site.

Belongs to the class I-like SAM-binding methyltransferase superfamily. rRNA adenine N(6)-methyltransferase family. KsgA subfamily. As to quaternary structure, interacts with mitochondrial RNA polymerase POLRMT. Interacts with TFAM. Bound to the maturing mtSSU until the late stages of assembly.

The protein resides in the mitochondrion. It carries out the reaction adenosine(N)/adenosine(N+1) in rRNA + 4 S-adenosyl-L-methionine = N(6)-dimethyladenosine(N)/N(6)-dimethyladenosine(N+1) in rRNA + 4 S-adenosyl-L-homocysteine + 4 H(+). S-adenosyl-L-methionine-dependent methyltransferase which specifically dimethylates mitochondrial 12S rRNA at the conserved stem loop. Also required for basal transcription of mitochondrial DNA, probably via its interaction with POLRMT and TFAM. Stimulates transcription independently of the methyltransferase activity. Functionally, mitochondrial methyltransferase which uses S-adenosyl methionine to dimethylate two highly conserved adjacent adenosine residues (A1583 and A1584) within the loop of helix 45 at the 3-prime end of 12S rRNA, thereby regulating the assembly or stability of the small subunit of the mitochondrial ribosome. Also required for basal transcription of mitochondrial DNA, probably via its interaction with POLRMT and TFAM. Stimulates transcription independently of the methyltransferase activity. In Pongo abelii (Sumatran orangutan), this protein is Dimethyladenosine transferase 1, mitochondrial (TFB1M).